The chain runs to 321 residues: Tyrosine recombinase XerC (321 aa).

In terms of domain architecture, Core-binding (CB) spans 16 to 107 (PSIAQEMTRW…GLRSFGRFLE (92 aa)). In terms of domain architecture, Tyr recombinase spans 128 to 315 (SLPKPLPMAS…DSERLLEVYA (188 aa)). Catalysis depends on residues R173, K199, H267, R270, and H293. Y302 (O-(3'-phospho-DNA)-tyrosine intermediate) is an active-site residue.

The protein belongs to the 'phage' integrase family. XerC subfamily. In terms of assembly, forms a cyclic heterotetrameric complex composed of two molecules of XerC and two molecules of XerD.

The protein resides in the cytoplasm. In terms of biological role, site-specific tyrosine recombinase, which acts by catalyzing the cutting and rejoining of the recombining DNA molecules. The XerC-XerD complex is essential to convert dimers of the bacterial chromosome into monomers to permit their segregation at cell division. It also contributes to the segregational stability of plasmids. The polypeptide is Tyrosine recombinase XerC (Bradyrhizobium diazoefficiens (strain JCM 10833 / BCRC 13528 / IAM 13628 / NBRC 14792 / USDA 110)).